Reading from the N-terminus, the 41-residue chain is Large ribosomal subunit protein bL36B (41 aa).

It belongs to the bacterial ribosomal protein bL36 family.

The chain is Large ribosomal subunit protein bL36B from Neisseria meningitidis serogroup B (strain ATCC BAA-335 / MC58).